A 615-amino-acid chain; its full sequence is UvrABC system protein C (615 aa).

The GIY-YIG domain occupies 14–91; it reads TSPGCYIHKD…IKENKPKYNI (78 aa). The region spanning 196-231 is the UVR domain; it reads NKIIDELKGKMAAAAQTMEFERAAEYRDLIQAIGTL.

The protein belongs to the UvrC family. Interacts with UvrB in an incision complex.

It localises to the cytoplasm. The UvrABC repair system catalyzes the recognition and processing of DNA lesions. UvrC both incises the 5' and 3' sides of the lesion. The N-terminal half is responsible for the 3' incision and the C-terminal half is responsible for the 5' incision. This Streptococcus pneumoniae (strain ATCC 700669 / Spain 23F-1) protein is UvrABC system protein C.